A 153-amino-acid chain; its full sequence is Cofilin (153 aa).

The 145-residue stretch at 4-148 (SGATVSQDCI…EYDSILKTVS (145 aa)) folds into the ADF-H domain.

The protein belongs to the actin-binding proteins ADF family.

The protein resides in the cytoplasm. Its subcellular location is the cytoskeleton. It localises to the nucleus matrix. Functionally, controls reversibly actin polymerization and depolymerization in a pH-sensitive manner. It has the ability to bind G- and F-actin in a 1:1 ratio of cofilin to actin. Binding to F-actin is regulated by tropomyosin. It is the major component of intranuclear and cytoplasmic actin rods. Required for accumulation of actin at the cell division site via depolymerizing actin at the cell ends. In association with myosin II has a role in the assembly of the contractile ring via severing actin filaments. Involved in the maintenance of the contractile ring once formed. In association with profilin and capping protein, has a role in the mitotic reorganization of the actin cytoskeleton. This is Cofilin (COF1) from Gibberella zeae (strain ATCC MYA-4620 / CBS 123657 / FGSC 9075 / NRRL 31084 / PH-1) (Wheat head blight fungus).